Here is a 285-residue protein sequence, read N- to C-terminus: Chitinase 4 (285 aa).

The N-terminal stretch at 1–27 (MAAKMATMVALVFGLALLLSAAAPAAA) is a signal peptide. Residues 28–62 (QNCGCQDGYCCSQWGYCGTTEAYCGQGCQSGPCWG) form the Chitin-binding type-1 domain. Disulfide bonds link Cys-30/Cys-38, Cys-32/Cys-44, Cys-37/Cys-51, Cys-55/Cys-60, Cys-104/Cys-153, Cys-166/Cys-175, and Cys-253/Cys-285. Glu-148 serves as the catalytic Proton donor.

It belongs to the glycosyl hydrolase 19 family. Chitinase class IV subfamily. Expressed at low levels in leaves, sheaths and meristems.

It catalyses the reaction Random endo-hydrolysis of N-acetyl-beta-D-glucosaminide (1-&gt;4)-beta-linkages in chitin and chitodextrins.. Its function is as follows. Hydrolyzes chitin and may function in reproductive organs during embryogenesis and seed maturation. The protein is Chitinase 4 (Cht4) of Oryza sativa subsp. japonica (Rice).